The following is a 143-amino-acid chain: KQRTVPRCFCCGSLQFPHHRPGLRRHRKNTTRSHAAVDRPRRTRRGDASPRPTGCGGERRAPAIPGGATSPHMSRRSGRGPVGDGREASRTAAEEKRRRKENYRQGPGFLLEKQHVGQDPDANGNHDDDDHAGQDAAHQCRIQ.

A disordered region spans residues 13–143 (SLQFPHHRPG…QDAAHQCRIQ (131 aa)). The span at 17-31 (PHHRPGLRRHRKNTT) shows a compositional bias: basic residues. Composition is skewed to basic and acidic residues over residues 35 to 48 (AAVD…RGDA), 84 to 96 (DGRE…AEEK), and 112 to 133 (EKQH…DHAG). Low complexity predominate over residues 134–143 (QDAAHQCRIQ).

This is an uncharacterized protein from Homo sapiens (Human).